The following is a 1039-amino-acid chain: MKRHLNTCYRLVWNHMTGAFVVASELARARGKRGGVAVALSLAAVTSLPVLAADIVVHPGETVNGGTLANHDNQIVFGTTNGMTISTGLEYGPDNEANTGGQWVQDGGTANKTTVTSGGLQRVNPGGSVSDTVISAGGGQSLQGRAVNTTLNGGEQWMHEGAIATGTVINDKGWQVVKPGTVATDTVVNTGAEGGPDAENGDTGQFVRGDAVRTTINKNGRQIVRAEGTANTTVVYAGGDQTVHGHALDTTLNGGYQYVHNGGTASDTVVNSDGWQIVKNGGVAGNTTVNQKGRLQVDAGGTATNVTLKQGGALVTSTAATVTGINRLGAFSVVEGKADNVVLENGGRLDVLTGHTATNTRVDDGGTLDVRNGGTATTVSMGNGGVLLADSGAAVSGTRSDGKAFSIGGGQADALMLEKGSSFTLNAGDTATDTTVNGGLFTARGGTLAGTTTLNNGAILTLSGKTVNNDTLTIREGDALLQGGSLTGNGSVEKSGSGTLTVSNTTLTQKAVNLNEGTLTLNDSTVTTDVIAQRGTALKLTGSTVLNGAIDPTNVTLASGATWNIPDNATVQSVVDDLSHAGQIHFTSTRTGKFVPATLKVKNLNGQNGTISLRVRPDMAQNNADRLVIDGGRATGKTILNLVNAGNSASGLATSGKGIQVVEAINGATTEEGAFVQGNRLQAGAFNYSLNRDSDESWYLRSENAYRAEVPLYASMLTQAMDYDRIVAGSRSHQTGVNGENNSVRLSIQGGHLGHDNNGGIARGATPESSGSYGFVRLEGDLMRTEVAGMSVTAGVYGAAGHSSVDVKDDDGSRAGTVRDDAGSLGGYLNLVHTSSGLWADIVAQGTRHSMKASSDNNDFRARGWGWLGSLETGLPFSITDNLMLEPQLQYTWQGLSLDDGKDNAGYVKFGHGSAQHVRAGFRLGSHNDMTFGEGTSSRAPLRDSAKHSVSELPVNWWVQPSVIRTFSSRGDMRVGTSTAGSGMTFSPSQNGTSLDLQAGLEARVRENITLGVQAGYAHSVSGSSAEGYNGQATLNVTF.

Residues 1 to 52 (MKRHLNTCYRLVWNHMTGAFVVASELARARGKRGGVAVALSLAAVTSLPVLA) form the signal peptide. One can recognise an Autotransporter domain in the interval 737-1039 (VNGENNSVRL…NGQATLNVTF (303 aa)).

As to quaternary structure, interaction with TamA of the translocation and assembly module (TAM) initiates insertion in the outer membrane.

It is found in the periplasm. The protein localises to the secreted. Its subcellular location is the cell surface. It localises to the cell outer membrane. Controls colony form variation and autoaggregation. May function as an adhesin. In Escherichia coli (strain K12), this protein is Antigen 43 (flu).